Here is a 512-residue protein sequence, read N- to C-terminus: Spermatocyte protein spe-8 (512 aa).

Residues 1 to 85 form a disordered region; sequence MRSKSSEGDL…PKPSSDNNNS (85 aa). A compositionally biased stretch (basic and acidic residues) spans 15 to 41; it reads TQSREDKETTATYSEDTKPETQKERNA. Over residues 68-78 the composition is skewed to pro residues; the sequence is EAPPPPPPPKP. The region spanning 114 to 205 is the SH2 domain; it reads FYHGFMGRNE…YEGMTLICGL (92 aa). Residues 217 to 485 form the Protein kinase domain; the sequence is VTLNKKLGEG…KEEVGFHEIE (269 aa). ATP-binding positions include 223 to 231 and Lys250; that span reads LGEGQFGEV. Residue Asp344 is the Proton acceptor of the active site.

Belongs to the protein kinase superfamily. Tyr protein kinase family. Fes/fps subfamily. In terms of tissue distribution, expression is restricted to male germline.

It localises to the cell membrane. The protein resides in the cytoplasm. The catalysed reaction is L-tyrosyl-[protein] + ATP = O-phospho-L-tyrosyl-[protein] + ADP + H(+). In terms of biological role, probable non-receptor tyrosine-protein kinase which plays a role in spermatid activation (spermiogenesis) in hermaphrodites. This is Spermatocyte protein spe-8 from Caenorhabditis elegans.